The chain runs to 130 residues: Follitropin subunit beta (130 aa).

The N-terminal stretch at 1–20 (MMKSIQLCILLWCLRAVCCH) is a signal peptide. 6 disulfide bridges follow: cysteine 22–cysteine 70, cysteine 36–cysteine 85, cysteine 39–cysteine 123, cysteine 47–cysteine 101, cysteine 51–cysteine 103, and cysteine 106–cysteine 113. Asparagine 26 and asparagine 43 each carry an N-linked (GlcNAc...) asparagine glycan.

Belongs to the glycoprotein hormones subunit beta family. In terms of assembly, heterodimer. The active follitropin is a heterodimer composed of an alpha chain/CGA shared with other hormones and a unique beta chain/FSHB shown here.

It localises to the secreted. Functionally, together with the alpha chain CGA constitutes follitropin, the follicle-stimulating hormone, and provides its biological specificity to the hormone heterodimer. Binds FSHR, a G protein-coupled receptor, on target cells to activate downstream signaling pathways. Follitropin is involved in follicle development and spermatogenesis in reproductive organs. The sequence is that of Follitropin subunit beta (Fshb) from Rattus norvegicus (Rat).